We begin with the raw amino-acid sequence, 519 residues long: MAAEREPPPLGDVKPTDFEELEDGEDLFTSTVSTLESSPSSPEPASLPAEDISANSNGSKPVEVVLDDDREDLFAEATEEVSLDSPERELILSSEPSPAVTPVTPTTLIAPRIESKSISAPVIFDRSRDEIEEEANGDIFDIEIGVSDPEKVGDGMNAYMAYRVTTKTSLSMFSKSEFSVKRRFSDFLGLHSKLASKYLHVGYIVPPAPEKSIVGMTKVKVGKEDSSSTEFVEKRRAALERYLQRTVKHPTLLQDPDLRQFLESSELPRAVNTQALSGAGILRMVNKAADAVNKMTIKMNESDAWFEEKQQQFENLDQQLRKLHASVEALVCHRKELSANTAAFAKSAAMLGNSEDHTALSRALSQLAEVEEKIDQLHQEQAFADFYMFSELLSDYIRLIAAVKGVFDHRMKCWQKWEDAQITLLKKRETEAKMMVANKPDKIQQAKNEIREWEAKVQQGERDFEQISKTIRKEVGRFEKERVKDFKAVIIKYLESLVQTQQQLIKYWEAFLPEAKAIA.

Low complexity predominate over residues 30–50; the sequence is STVSTLESSPSSPEPASLPAE. The disordered stretch occupies residues 30–62; sequence STVSTLESSPSSPEPASLPAEDISANSNGSKPV. Phosphoserine is present on Ser-97. Phosphothreonine is present on residues Thr-101 and Thr-104. Ser-117 and Ser-119 each carry phosphoserine. The PX domain occupies 140–269; the sequence is FDIEIGVSDP…QFLESSELPR (130 aa). Residues Arg-183, Ser-185, Lys-211, and Arg-235 each coordinate a 1,2-diacyl-sn-glycero-3-phospho-(1D-myo-inositol-3-phosphate). Ser-185 bears the Phosphoserine mark. Residues 260-519 form an interaction with RhoG region; the sequence is QFLESSELPR…AFLPEAKAIA (260 aa). Ser-277 carries the phosphoserine modification. The segment at 278–295 is membrane-binding amphipathic helix; the sequence is GAGILRMVNKAADAVNKM. The 221-residue stretch at 299 to 519 folds into the BAR domain; that stretch reads MNESDAWFEE…AFLPEAKAIA (221 aa). Lys-469 is subject to N6-acetyllysine.

This sequence belongs to the sorting nexin family. In terms of assembly, predominantly forms heterodimers with BAR domain-containing sorting nexins SNX5, SNX6 and SNX32; can self-associate to form homodimers. The heterodimers are proposed to self-assemble into helical arrays on the membrane to stabilize and expand local membrane curvature underlying endosomal tubule formation. Thought to be a component of the originally described retromer complex (also called SNX-BAR retromer) which is a pentamer containing the heterotrimeric retromer cargo-selective complex (CSC), also described as vacuolar protein sorting subcomplex (VPS), and a heterodimeric membrane-deforming subcomplex formed between SNX1 or SNX2 and SNX5 or SNX6 (also called SNX-BAR subcomplex); the respective CSC and SNX-BAR subcomplexes associate with low affinity. Interacts with SNX5, SNX6, SNX32, VPS26A, VPS29, VPS35, FNBP1, KALRN, RHOG (GDP-bound form).

It is found in the early endosome membrane. The protein resides in the cell projection. The protein localises to the lamellipodium. Involved in several stages of intracellular trafficking. Interacts with membranes containing phosphatidylinositol 3-phosphate (PtdIns(3P)) or phosphatidylinositol 3,5-bisphosphate (PtdIns(3,5)P2). Acts in part as component of the retromer membrane-deforming SNX-BAR subcomplex. The SNX-BAR retromer mediates retrograde transport of cargo proteins from endosomes to the trans-Golgi network (TGN) and is involved in endosome-to-plasma membrane transport for cargo protein recycling. The SNX-BAR subcomplex functions to deform the donor membrane into a tubular profile called endosome-to-TGN transport carrier (ETC). Can sense membrane curvature and has in vitro vesicle-to-membrane remodeling activity. Required for retrograde endosome-to-TGN transport of TGN38. Promotes KALRN- and RHOG-dependent but retromer-independent membrane remodeling such as lamellipodium formation; the function is dependent on GEF activity of KALRN. This is Sorting nexin-2 (Snx2) from Mus musculus (Mouse).